A 286-amino-acid polypeptide reads, in one-letter code: MAGAKEIRSKIASIKSTQKITSAMEKVAVSKMRKAQMRMAASRPYAERIRQVIGHLANANPEYRHPFMIERPVKRAGYIVVSSDRGLCGGLNTNLFKALVKDMNVNREQGVEIDLCVIGSKGATFFRIFGGNVVAAISHLGEEPSINDLIGSVKVMLDAYLDGRIDRLSVVSNKFVNTMTQTPTVEQLVPLVATPDQELKHHWDYLYEPDAKELLDGLMVRYVESQVYQAVVENNAAEQAARMIAMKNATDNAGDLISELQLIYNKARQAAITQEISEIVGGAAAV.

Belongs to the ATPase gamma chain family. In terms of assembly, F-type ATPases have 2 components, CF(1) - the catalytic core - and CF(0) - the membrane proton channel. CF(1) has five subunits: alpha(3), beta(3), gamma(1), delta(1), epsilon(1). CF(0) has three main subunits: a, b and c.

It localises to the cell inner membrane. In terms of biological role, produces ATP from ADP in the presence of a proton gradient across the membrane. The gamma chain is believed to be important in regulating ATPase activity and the flow of protons through the CF(0) complex. This chain is ATP synthase gamma chain, found in Pseudomonas putida (strain W619).